Consider the following 292-residue polypeptide: 2,3-dihydroxybenzoate decarboxylase (292 aa).

Cys-263 is an active-site residue.

This sequence belongs to the metallo-dependent hydrolases superfamily. As to quaternary structure, homotetramer.

It catalyses the reaction 2,3-dihydroxybenzoate + H(+) = catechol + CO2. Its pathway is aromatic compound metabolism; benzoate degradation via hydroxylation. The protein is 2,3-dihydroxybenzoate decarboxylase of Aspergillus niger.